Reading from the N-terminus, the 1084-residue chain is Transcription elongation factor SPT5 (1084 aa).

Residues 1 to 91 (MSDSEDSDFS…DDEYEDEDPW (91 aa)) form a disordered region. Composition is skewed to acidic residues over residues 20–32 (AEEV…EEEQ), 41–62 (AEEE…EEDD), and 77–91 (DEAD…EDPW). The tract at residues 175 to 269 (DPNLWTVKCK…TDVLKVVKEV (95 aa)) is interaction with SUPT4H1. KOW domains follow at residues 272-305 (LKPK…ISLK), 419-450 (LQAG…ITIM), 471-502 (FRMG…VILF), and 593-626 (IHVK…LHCK). The interaction with RNA polymerase II stretch occupies residues 312–419 (LDRIKARMSM…TTGKEREHNL (108 aa)). Ser665 is modified (phosphoserine). The tract at residues 667-700 (RISSPMHPGGGGQPQRGGGGGGGGGMGRGRGRRD) is disordered. Residues 674-694 (PGGGGQPQRGGGGGGGGGMGR) show a composition bias toward gly residues. Positions 702–735 (DLIGQTVRISQGPYKGYIGVVKDATESTARVELH) constitute a KOW 5 domain. Residues 748–973 (LTTVGGKERQ…HTPGSNIDQA (226 aa)) are disordered. A CTR1-1; approximate repeat occupies 758–763 (GRSSTH). Residues 758–815 (GRSSTHLRTPMYGSQTPIYGTGSRTPMYGSQTPLHDGSRTPHYGSQTPLHDGSRTPGQ) form an 8 X 7 AA approximate tandem repeats of G-S-[QR]-T-P-X-[YQ], motif CTR1 region. Over residues 759-790 (RSSTHLRTPMYGSQTPIYGTGSRTPMYGSQTP) the composition is skewed to polar residues. The stretch at 764–769 (LRTPMY) is one CTR1-2; approximate repeat. The stretch at 770–776 (GSQTPIY) is one CTR1-3 repeat. Thr773 and Thr782 each carry phosphothreonine; by CDK9. Residues 779 to 785 (GSRTPMY) form a CTR1-4 repeat. The stretch at 786 to 792 (GSQTPLH) is one CTR1-5 repeat. The stretch at 794 to 800 (GSRTPHY) is one CTR1-6 repeat. Residues 801-807 (GSQTPLH) form a CTR1-7 repeat. Residues 809 to 815 (GSRTPGQ) form a CTR1-8 repeat. The segment covering 832–842 (DEYEFAYDDEP) has biased composition (acidic residues). The stretch at 842–849 (PSPSPQGY) is one CTR2-1 repeat. A 10 X 8 AA approximate tandem repeats of P-[TS]-P-S-P-[QA]-[SG]-Y, motif CTR2 region spans residues 842-948 (PSPSPQGYGG…ASPSPSPVGY (107 aa)). A CTR2-2; approximate repeat occupies 852–860 (TPNPQTPGY). Pro residues predominate over residues 855–864 (PQTPGYPEVP). The stretch at 861–867 (PEVPSPQ) is one CTR2-3; approximate repeat. Positions 866–888 (PQVNPQYNPQTPGTPAMYNTDQY) are enriched in polar residues. Residues 879–883 (TPAMY) form a CTR2-4; half-length repeat. The CTR2-5; approximate repeat unit spans residues 894–900 (PSPQGSY). The span at 894–909 (PSPQGSYQPSPSPQSY) shows a compositional bias: low complexity. Residues 902–909 (PSPSPQSY) form a CTR2-6 repeat. The stretch at 914–919 (PSPVGY) is one CTR2-7; approximate repeat. The CTR2-8 repeat unit spans residues 922–928 (THSPASY). The stretch at 930–937 (PTPSPMAY) is one CTR2-9 repeat. One copy of the CTR2-10 repeat lies at 941–948 (PSPSPVGY).

It belongs to the SPT5 family. Interacts with SUPT4H1 to form the DSIF complex. DSIF interacts with RNA polymerase II and with the positive transcription elongation factor b complex (P-TEFb complex), which is composed of CDK9 and cyclin-T. Post-translationally, phosphorylated. Phosphorylation by P-TEFb (CDK9) at Thr residues of the C-terminal repeats alleviates transcriptional pausing and promotes transcription elongation.

The protein resides in the nucleus. Its function is as follows. Component of the DRB sensitivity-inducing factor complex (DSIF complex), which regulates mRNA processing and transcription elongation by RNA polymerase II. DSIF positively regulates mRNA capping by stimulating the mRNA guanylyltransferase activity of RNGTT/CAP1A. DSIF also acts cooperatively with the negative elongation factor complex (NELF complex) to enhance transcriptional pausing at sites proximal to the promoter. Transcriptional pausing may facilitate the assembly of an elongation competent RNA polymerase II complex. DSIF and NELF promote pausing by inhibition of the transcription elongation factor TFIIS/S-II. TFIIS/S-II binds to RNA polymerase II at transcription pause sites and stimulates the weak intrinsic nuclease activity of the enzyme. Cleavage of blocked transcripts by RNA polymerase II promotes the resumption of transcription from the new 3' terminus and may allow repeated attempts at transcription through natural pause sites. Following phosphorylation by CDK9, DSIF can also positively regulate transcriptional elongation. Regulation of transcriptional elongation by this protein is required for the expression of genes which control neuronal development. The polypeptide is Transcription elongation factor SPT5 (supt5h) (Danio rerio (Zebrafish)).